Reading from the N-terminus, the 245-residue chain is Large ribosomal subunit protein uL4 (245 aa).

Residues 1-13 show a composition bias toward polar residues; the sequence is MSRVATSDPSVTA. 3 disordered regions span residues 1 to 28, 56 to 114, and 224 to 245; these read MSRVATSDPSVTARTVAVHAPNGGEGGS, ARQG…QRTP, and TSTAGTEAAAGTEGVAGAEENK. Positions 59-71 are enriched in basic and acidic residues; the sequence is GTHDTKTRGEVRG. Residues 72 to 83 show a composition bias toward basic residues; sequence GGRKPYRQKGTG.

It belongs to the universal ribosomal protein uL4 family. Part of the 50S ribosomal subunit.

Its function is as follows. One of the primary rRNA binding proteins, this protein initially binds near the 5'-end of the 23S rRNA. It is important during the early stages of 50S assembly. It makes multiple contacts with different domains of the 23S rRNA in the assembled 50S subunit and ribosome. Functionally, forms part of the polypeptide exit tunnel. This is Large ribosomal subunit protein uL4 from Frankia casuarinae (strain DSM 45818 / CECT 9043 / HFP020203 / CcI3).